The sequence spans 356 residues: S-adenosylmethionine:tRNA ribosyltransferase-isomerase (356 aa).

It belongs to the QueA family. Monomer.

It is found in the cytoplasm. It carries out the reaction 7-aminomethyl-7-carbaguanosine(34) in tRNA + S-adenosyl-L-methionine = epoxyqueuosine(34) in tRNA + adenine + L-methionine + 2 H(+). It participates in tRNA modification; tRNA-queuosine biosynthesis. In terms of biological role, transfers and isomerizes the ribose moiety from AdoMet to the 7-aminomethyl group of 7-deazaguanine (preQ1-tRNA) to give epoxyqueuosine (oQ-tRNA). The chain is S-adenosylmethionine:tRNA ribosyltransferase-isomerase from Xanthomonas euvesicatoria pv. vesicatoria (strain 85-10) (Xanthomonas campestris pv. vesicatoria).